Here is a 432-residue protein sequence, read N- to C-terminus: Acetylserotonin O-methyltransferase (432 aa).

S-adenosyl-L-methionine is bound by residues Y146, W163, D209, 235-237, and R252; that span reads GDF. The Proton donor/acceptor role is filled by H255. 3 residues coordinate substrate: D256, N302, and Q306. The segment at 373-432 is disordered; sequence VPGARSDAAGTGSGTGNTGSGIMLQGETLESEVSAPQAGSDVGGAGNEPRSGTLKQGDWK.

This sequence belongs to the class I-like SAM-binding methyltransferase superfamily. Cation-independent O-methyltransferase family. Homodimer. Expressed predominantly in the pineal gland (at protein level). Very low expression, if any, in the retina.

It catalyses the reaction N-acetylserotonin + S-adenosyl-L-methionine = melatonin + S-adenosyl-L-homocysteine + H(+). The protein operates within aromatic compound metabolism; melatonin biosynthesis; melatonin from serotonin: step 1/2. In terms of biological role, catalyzes the transfer of a methyl group onto N-acetylserotonin, producing melatonin (N-acetyl-5-methoxytryptamine). The polypeptide is Acetylserotonin O-methyltransferase (Asmt) (Rattus norvegicus (Rat)).